The sequence spans 132 residues: Chemokine-like protein TAFA-5 (132 aa).

Positions 1–43 (MAPSPRTGSRQDATALPSMSSTFWAFMILASLLIAYCSQLAAG) are cleaved as a signal peptide. N-linked (GlcNAc...) asparagine glycosylation occurs at Asn113.

The protein belongs to the TAFA family. Expressed in the subcutaneous and perirenal adipose tissue (at protein level). Highly expressed in adipose tissue with moderate expression in the brain and ovary. Isoform 2: Brain-specific.

The protein localises to the secreted. Acts as a chemokine-like protein by regulating cell proliferation and migration through activation of G protein-coupled receptors (GPCRs), such as S1PR2 and FPR2. Stimulates chemotactic migration of macrophages mediated by the MAPK3/ERK1 and AKT1 pathway. Blocks TNFSF11/RANKL-induced osteoclast formation from macrophages by inhibiting up-regulation of osteoclast fusogenic and differentiation genes. Stimulation of macrophage migration and inhibition of osteoclast formation is mediated via GPCR FPR2. Acts as an adipokine by negatively regulating vascular smooth muscle cell (VSMC) proliferation and migration in response to platelet-derived growth factor stimulation via GPCR S1PR2 and G protein GNA12/GNA13-transmitted RHOA signaling. Inhibits injury-induced cell proliferation and neointima formation in the femoral arteries. The sequence is that of Chemokine-like protein TAFA-5 from Homo sapiens (Human).